The following is a 247-amino-acid chain: ATP synthase subunit a, chloroplastic (247 aa).

5 helical membrane passes run 38-58 (QVLI…TIAV), 95-115 (VPFI…GALL), 134-154 (INTT…AGLT), 199-219 (LVVV…VMFL), and 220-240 (GLFT…AYIG).

Belongs to the ATPase A chain family. As to quaternary structure, F-type ATPases have 2 components, CF(1) - the catalytic core - and CF(0) - the membrane proton channel. CF(1) has five subunits: alpha(3), beta(3), gamma(1), delta(1), epsilon(1). CF(0) has four main subunits: a, b, b' and c.

It localises to the plastid. It is found in the chloroplast thylakoid membrane. Functionally, key component of the proton channel; it plays a direct role in the translocation of protons across the membrane. This Buxus microphylla (Littleleaf boxwood) protein is ATP synthase subunit a, chloroplastic.